The sequence spans 340 residues: Guanine nucleotide-binding protein G(I)/G(S)/G(T) subunit beta-2 (340 aa).

Serine 2 is subject to N-acetylserine. WD repeat units lie at residues 53–83 (GHLA…IIWD), 95–125 (LRSS…SIYS), 141–170 (GHTG…ALWD), 182–212 (GHSG…KLWD), 224–254 (GHES…RLFD), 268–298 (NIIC…NIWD), and 310–340 (GHDN…KIWN). Position 239 is a phosphotyrosine (tyrosine 239).

It belongs to the WD repeat G protein beta family. G proteins are composed of 3 units, alpha, beta and gamma. In this context, interacts with GNAI2 and GNG2. Interacts with ARHGEF18 and RASD2. Interacts with ATXN10. Interacts with SCN8A. Expressed in all cardiac subcompartments and in the brain, with highest levels in the atrioventricular node and brain.

Its subcellular location is the cytoplasm. It is found in the perinuclear region. The protein localises to the cell membrane. Functionally, guanine nucleotide-binding proteins (G proteins) are involved as a modulator or transducer in various transmembrane signaling systems. The beta and gamma chains are required for the GTPase activity, for replacement of GDP by GTP, and for G protein-effector interaction. The polypeptide is Guanine nucleotide-binding protein G(I)/G(S)/G(T) subunit beta-2 (GNB2) (Homo sapiens (Human)).